The primary structure comprises 709 residues: Phosphate acetyltransferase (709 aa).

The segment at 389–709 is phosphate acetyltransferase; the sequence is EFCYRLKILS…TIALTSIQSL (321 aa).

In the N-terminal section; belongs to the CobB/CobQ family. This sequence in the C-terminal section; belongs to the phosphate acetyltransferase and butyryltransferase family. In terms of assembly, homohexamer.

The protein resides in the cytoplasm. It carries out the reaction acetyl-CoA + phosphate = acetyl phosphate + CoA. Its pathway is metabolic intermediate biosynthesis; acetyl-CoA biosynthesis; acetyl-CoA from acetate: step 2/2. In terms of biological role, involved in acetate metabolism. The protein is Phosphate acetyltransferase (pta) of Buchnera aphidicola subsp. Schizaphis graminum (strain Sg).